A 1150-amino-acid polypeptide reads, in one-letter code: uncharacterized protein (1150 aa).

The protein belongs to the TMEM1 family.

This is an uncharacterized protein from Schizosaccharomyces pombe (strain 972 / ATCC 24843) (Fission yeast).